A 112-amino-acid chain; its full sequence is Ribosome-binding factor A (112 aa).

It belongs to the RbfA family. As to quaternary structure, monomer. Binds 30S ribosomal subunits, but not 50S ribosomal subunits or 70S ribosomes.

It localises to the cytoplasm. One of several proteins that assist in the late maturation steps of the functional core of the 30S ribosomal subunit. Associates with free 30S ribosomal subunits (but not with 30S subunits that are part of 70S ribosomes or polysomes). Required for efficient processing of 16S rRNA. May interact with the 5'-terminal helix region of 16S rRNA. In Ruthia magnifica subsp. Calyptogena magnifica, this protein is Ribosome-binding factor A.